Consider the following 94-residue polypeptide: Selenoprotein K (94 aa).

Residues 20-42 (LSLITDFFWGIAEFVVLFFKTLL) traverse the membrane as a helical segment. The segment at 48–94 (KRRSYGNSSDSRYDDGRGPPGNPPRRMGRINHLRGPSPPPMAGGUGR) is disordered. Residue selenocysteine 92 is a non-standard amino acid, selenocysteine.

Belongs to the selenoprotein K family. As to quaternary structure, interacts with DERL1, DERL2, DERL3 and SELENOS. The SELENOK-SELENOS complex interacts with VCP. Interacts with ZDHHC6. Cleaved by CAPN2/m-calpain in resting macrophages but not in activated macrophages. Macrophage activation up-regulates expression of the calpain inhibitor CAST/calpastatin, resulting in inhibition of CAPN2 activity. Post-translationally, truncated SELENOK proteins produced by failed UGA/Sec decoding are ubiquitinated by the CRL2(KLHDC2) complex, which recognizes the diglycine (Gly-Gly) at the C-terminus of truncated SELENOK proteins. As to expression, highly expressed in heart.

It localises to the endoplasmic reticulum membrane. The protein resides in the cell membrane. Required for Ca(2+) flux in immune cells and plays a role in T-cell proliferation and in T-cell and neutrophil migration. Involved in endoplasmic reticulum-associated degradation (ERAD) of soluble glycosylated proteins. Required for palmitoylation and cell surface expression of CD36 and involved in macrophage uptake of low-density lipoprotein and in foam cell formation. Together with ZDHHC6, required for palmitoylation of ITPR1 in immune cells, leading to regulate ITPR1 stability and function. Plays a role in protection of cells from ER stress-induced apoptosis. Protects cells from oxidative stress when overexpressed in cardiomyocytes. In Homo sapiens (Human), this protein is Selenoprotein K.